Consider the following 199-residue polypeptide: Recombination protein RecR (199 aa).

Residues 58–73 (CSVCYGLADSDPCHIC) form a C4-type zinc finger. One can recognise a Toprim domain in the interval 81–176 (DVVCVVEQGT…KITRIASGVP (96 aa)).

The protein belongs to the RecR family.

In terms of biological role, may play a role in DNA repair. It seems to be involved in an RecBC-independent recombinational process of DNA repair. It may act with RecF and RecO. This Desulfatibacillum aliphaticivorans protein is Recombination protein RecR.